The chain runs to 387 residues: MNRNDYDVVIIGGGPVGCITGEYIKNGRVLIVEEHQSIGVPLQCAGLISKNGVKELGNPKGVVNKVRGAYIYSKNSMVKIGNEGIRAYIFERKVMDKDIAIRAAKKCDFLLKAYGKIEKDKNGYKVEITHLGEKITLNPKIIVGADGAKTITGKKLGLVNNKNREILSSCQFEMVNAEVDDDFVYIFLDRKYSERFFTWIIPMGKDRVRVGLIDRGNCYNKLIRFINENKIAKEILKNATITEFSTGSLPIGYLDKTFKDNVLLVGDAACHVKPLSGGGLYFGAMGGKIAGEVISKYLNEDIENLELYDKRWKETFGSEIKNGLRVRKLFLKLGNDTLDKIIEKLSKSDLIDYINKHGDMDRQASLSIKVLKSLDIGLGFRILRDLL.

This sequence belongs to the geranylgeranyl reductase family. ChlP subfamily.

This is an uncharacterized protein from Methanocaldococcus jannaschii (strain ATCC 43067 / DSM 2661 / JAL-1 / JCM 10045 / NBRC 100440) (Methanococcus jannaschii).